The sequence spans 191 residues: Peptidyl-tRNA hydrolase (191 aa).

Tyr-17 provides a ligand contact to tRNA. Catalysis depends on His-22, which acts as the Proton acceptor. TRNA is bound by residues Tyr-68, Asn-70, and Asn-116.

This sequence belongs to the PTH family. In terms of assembly, monomer.

It localises to the cytoplasm. It carries out the reaction an N-acyl-L-alpha-aminoacyl-tRNA + H2O = an N-acyl-L-amino acid + a tRNA + H(+). Hydrolyzes ribosome-free peptidyl-tRNAs (with 1 or more amino acids incorporated), which drop off the ribosome during protein synthesis, or as a result of ribosome stalling. Its function is as follows. Catalyzes the release of premature peptidyl moieties from peptidyl-tRNA molecules trapped in stalled 50S ribosomal subunits, and thus maintains levels of free tRNAs and 50S ribosomes. The chain is Peptidyl-tRNA hydrolase from Francisella tularensis subsp. holarctica (strain FTNF002-00 / FTA).